The chain runs to 320 residues: Dermonecrotic toxin LarSicTox-alphaIB2a (320 aa).

The signal sequence occupies residues 1–15; the sequence is MSHSSTALLHPYVAA. A propeptide spanning residues 16–41 is cleaved from the precursor; the sequence is RATEKFAPIYFFCHPLQSAETDVAER. His52 is an active-site residue. Mg(2+) contacts are provided by Glu72 and Asp74. His88 serves as the catalytic Nucleophile. Cystine bridges form between Cys92/Cys98 and Cys94/Cys237. Asp132 lines the Mg(2+) pocket. Residue Asn297 is glycosylated (N-linked (GlcNAc...) asparagine).

The protein belongs to the arthropod phospholipase D family. Class II subfamily. Mg(2+) is required as a cofactor. As to expression, expressed by the venom gland.

It localises to the secreted. The enzyme catalyses an N-(acyl)-sphingosylphosphocholine = an N-(acyl)-sphingosyl-1,3-cyclic phosphate + choline. It carries out the reaction an N-(acyl)-sphingosylphosphoethanolamine = an N-(acyl)-sphingosyl-1,3-cyclic phosphate + ethanolamine. The catalysed reaction is a 1-acyl-sn-glycero-3-phosphocholine = a 1-acyl-sn-glycero-2,3-cyclic phosphate + choline. It catalyses the reaction a 1-acyl-sn-glycero-3-phosphoethanolamine = a 1-acyl-sn-glycero-2,3-cyclic phosphate + ethanolamine. Functionally, dermonecrotic toxins cleave the phosphodiester linkage between the phosphate and headgroup of certain phospholipids (sphingolipid and lysolipid substrates), forming an alcohol (often choline) and a cyclic phosphate. This toxin acts on sphingomyelin (SM). It may also act on ceramide phosphoethanolamine (CPE), lysophosphatidylcholine (LPC) and lysophosphatidylethanolamine (LPE), but not on lysophosphatidylserine (LPS), and lysophosphatidylglycerol (LPG). It acts by transphosphatidylation, releasing exclusively cyclic phosphate products as second products. Induces dermonecrosis, hemolysis, increased vascular permeability, edema, inflammatory response, and platelet aggregation. The polypeptide is Dermonecrotic toxin LarSicTox-alphaIB2a (Loxosceles arizonica (Arizona brown spider)).